Consider the following 746-residue polypeptide: NAD(P)H-quinone oxidoreductase subunit 5, chloroplastic (746 aa).

Transmembrane regions (helical) follow at residues 9–29, 40–60, 89–109, 125–145, 147–167, 185–205, 221–241, 258–278, 280–300, 327–347, 354–374, 396–416, 425–445, 547–567, 608–628, and 722–742; these read WIIPFIPLPVPILLGIGLLLF, WTFLSIFLLSIVMIFSVYLSI, IDPLTSIMLILITTVGILVLI, FAYLGFFTTSMLGLVTSSNLI, VYFFWELVGMCSYLLIGFWFT, GDFGLLLGILGLYWITGSFEF, VNLLFLTLCAFLLFVGPIAKS, TPISALIHAATMVAAGIFLVA, LLPLFIVIPSIMYIISLIGII, LGYMMLALGMGSYRPALFHLI, ALLFLGSGSIIHSMEAIVGYS, TAFLIGTLSLCGIPPLAWFWS, LLFSPIFAIIACSTAGLTAFY, ILFPMLVLLLFTLFVGTIGIP, FSVSIALFGIFIAYCLYKPFY, and FYLFLYLSYVFIFLMILFFFY.

It belongs to the complex I subunit 5 family. In terms of assembly, NDH is composed of at least 16 different subunits, 5 of which are encoded in the nucleus.

The protein resides in the plastid. It is found in the chloroplast thylakoid membrane. The catalysed reaction is a plastoquinone + NADH + (n+1) H(+)(in) = a plastoquinol + NAD(+) + n H(+)(out). It carries out the reaction a plastoquinone + NADPH + (n+1) H(+)(in) = a plastoquinol + NADP(+) + n H(+)(out). NDH shuttles electrons from NAD(P)H:plastoquinone, via FMN and iron-sulfur (Fe-S) centers, to quinones in the photosynthetic chain and possibly in a chloroplast respiratory chain. The immediate electron acceptor for the enzyme in this species is believed to be plastoquinone. Couples the redox reaction to proton translocation, and thus conserves the redox energy in a proton gradient. This chain is NAD(P)H-quinone oxidoreductase subunit 5, chloroplastic (ndhF), found in Draba nemorosa (Woodland whitlowgrass).